A 185-amino-acid polypeptide reads, in one-letter code: Ribosome-recycling factor (185 aa).

It belongs to the RRF family.

The protein resides in the cytoplasm. Its function is as follows. Responsible for the release of ribosomes from messenger RNA at the termination of protein biosynthesis. May increase the efficiency of translation by recycling ribosomes from one round of translation to another. This chain is Ribosome-recycling factor, found in Pseudomonas putida (strain ATCC 700007 / DSM 6899 / JCM 31910 / BCRC 17059 / LMG 24140 / F1).